A 230-amino-acid polypeptide reads, in one-letter code: MELCVALDLPSAKENLALAESLKAYNVWMKVGFRAYIRDGKPFIEALKAINPDFRIFLDLKLYDIPNTMADAAEEIAKLGVDMFNIHASAGAVAMKTVMERLSSYEKRPLVLAVTALTSFNEENFRMIYEKGIDEKAEQFARMSFENGLDGVVCSTFESRAIKNATSDDFLTLCPGIRPFGEDAGDQQRVATLELANEERVDFPVVGRPIYKDSDPKGKVEEILKLISTF.

Substrate contacts are provided by residues Asp-8, Lys-30, 59–68 (DLKLYDIPNT), Thr-118, Arg-178, Gln-187, Gly-207, and Arg-208. Lys-61 acts as the Proton donor in catalysis.

This sequence belongs to the OMP decarboxylase family. Type 1 subfamily. Homodimer.

The catalysed reaction is orotidine 5'-phosphate + H(+) = UMP + CO2. The protein operates within pyrimidine metabolism; UMP biosynthesis via de novo pathway; UMP from orotate: step 2/2. Its function is as follows. Catalyzes the decarboxylation of orotidine 5'-monophosphate (OMP) to uridine 5'-monophosphate (UMP). The sequence is that of Orotidine 5'-phosphate decarboxylase from Sulfurovum sp. (strain NBC37-1).